The following is a 304-amino-acid chain: tRNA dimethylallyltransferase (304 aa).

Residue 2 to 9 (GPTASGKT) coordinates ATP. 4 to 9 (TASGKT) serves as a coordination point for substrate. 4 interaction with substrate tRNA regions span residues 27–30 (DSAL), 151–155 (QRINR), 232–237 (RCVGYR), and 265–272 (KRQITWLR).

This sequence belongs to the IPP transferase family. As to quaternary structure, monomer. Requires Mg(2+) as cofactor.

It catalyses the reaction adenosine(37) in tRNA + dimethylallyl diphosphate = N(6)-dimethylallyladenosine(37) in tRNA + diphosphate. Its function is as follows. Catalyzes the transfer of a dimethylallyl group onto the adenine at position 37 in tRNAs that read codons beginning with uridine, leading to the formation of N6-(dimethylallyl)adenosine (i(6)A). The chain is tRNA dimethylallyltransferase from Actinobacillus pleuropneumoniae serotype 7 (strain AP76).